We begin with the raw amino-acid sequence, 224 residues long: Transcriptional regulatory protein CiaR (224 aa).

Residues 3–116 (KILLVEDDLG…ELKMRIQALL (114 aa)) enclose the Response regulatory domain. At Asp51 the chain carries 4-aspartylphosphate. Residues 124-222 (ENTLTYGNIV…LRSVGYLLKD (99 aa)) constitute a DNA-binding region (ompR/PhoB-type).

Post-translationally, phosphorylated by CiaH.

It localises to the cytoplasm. Its function is as follows. Member of the two-component regulatory system CiaH/CiaR. Involved in early steps of competence regulation and in penicillin susceptibility. The chain is Transcriptional regulatory protein CiaR (ciaR) from Streptococcus pneumoniae (strain ATCC BAA-255 / R6).